Here is a 235-residue protein sequence, read N- to C-terminus: 6-phosphogluconolactonase (235 aa).

Belongs to the glucosamine/galactosamine-6-phosphate isomerase family. 6-phosphogluconolactonase subfamily.

The catalysed reaction is 6-phospho-D-glucono-1,5-lactone + H2O = 6-phospho-D-gluconate + H(+). It functions in the pathway carbohydrate degradation; pentose phosphate pathway; D-ribulose 5-phosphate from D-glucose 6-phosphate (oxidative stage): step 2/3. Its function is as follows. Hydrolysis of 6-phosphogluconolactone to 6-phosphogluconate. The chain is 6-phosphogluconolactonase (pgl) from Borreliella burgdorferi (strain ATCC 35210 / DSM 4680 / CIP 102532 / B31) (Borrelia burgdorferi).